Consider the following 348-residue polypeptide: Zinc finger and SCAN domain-containing protein 16 (348 aa).

Residues Arg-41 to Leu-123 enclose the SCAN box domain. 2 disordered regions span residues Pro-160–Glu-184 and Arg-205–Ser-226. Residues Thr-163–Glu-184 are compositionally biased toward basic and acidic residues. 4 consecutive C2H2-type zinc fingers follow at residues Tyr-236–His-258, Tyr-264–His-286, Tyr-292–His-314, and Tyr-320–His-342.

The protein belongs to the krueppel C2H2-type zinc-finger protein family.

It localises to the nucleus. May be involved in transcriptional regulation. This is Zinc finger and SCAN domain-containing protein 16 (ZSCAN16) from Homo sapiens (Human).